A 304-amino-acid polypeptide reads, in one-letter code: Dipeptide transport system permease protein DppC (304 aa).

Residues 1–24 (MKTEHAKPLMTPEPNSPPPEDQYT) are disordered. The next 6 helical transmembrane spans lie at 41 to 61 (LAIV…FAPL), 108 to 128 (VGFF…LIAG), 141 to 161 (IFDI…VAIL), 164 to 184 (SLQN…GRLV), 227 to 247 (ATLG…LGLG), and 271 to 291 (WTVL…NMIG). The 190-residue stretch at 102 to 291 (ARLSLQVGFF…LVVLGFNMIG (190 aa)) folds into the ABC transmembrane type-1 domain.

This sequence belongs to the binding-protein-dependent transport system permease family. OppBC subfamily.

The protein resides in the cell membrane. In terms of biological role, probably part of the ABC transporter Dpp involved in dipeptide transport. Responsible for the translocation of the substrate across the membrane. In Alkalihalophilus pseudofirmus (strain ATCC BAA-2126 / JCM 17055 / OF4) (Bacillus pseudofirmus), this protein is Dipeptide transport system permease protein DppC (dppC).